An 862-amino-acid chain; its full sequence is Protein translocase subunit SecA (862 aa).

ATP is bound by residues Gln88, 106–110, and Asp506; that span reads GEGKT. Positions 839, 841, 850, and 851 each coordinate Zn(2+).

Belongs to the SecA family. As to quaternary structure, monomer and homodimer. Part of the essential Sec protein translocation apparatus which comprises SecA, SecYEG and auxiliary proteins SecDF-YajC and YidC. Zn(2+) is required as a cofactor.

It is found in the cell inner membrane. The protein localises to the cytoplasm. The enzyme catalyses ATP + H2O + cellular proteinSide 1 = ADP + phosphate + cellular proteinSide 2.. Functionally, part of the Sec protein translocase complex. Interacts with the SecYEG preprotein conducting channel. Has a central role in coupling the hydrolysis of ATP to the transfer of proteins into and across the cell membrane, serving as an ATP-driven molecular motor driving the stepwise translocation of polypeptide chains across the membrane. The sequence is that of Protein translocase subunit SecA from Campylobacter jejuni subsp. doylei (strain ATCC BAA-1458 / RM4099 / 269.97).